Here is a 129-residue protein sequence, read N- to C-terminus: Prefoldin subunit 4 (129 aa).

At methionine 1 the chain carries N-acetylmethionine.

Belongs to the prefoldin subunit beta family. As to quaternary structure, heterohexamer of two PFD-alpha type and four PFD-beta type subunits.

Its function is as follows. Binds specifically to cytosolic chaperonin (c-CPN) and transfers target proteins to it. Binds to nascent polypeptide chain and promotes folding in an environment in which there are many competing pathways for nonnative proteins. In Saccharomyces cerevisiae (strain ATCC 204508 / S288c) (Baker's yeast), this protein is Prefoldin subunit 4 (GIM3).